A 218-amino-acid chain; its full sequence is Urease accessory protein UreG (218 aa).

22–29 provides a ligand contact to GTP; sequence GPVGSGKT.

The protein belongs to the SIMIBI class G3E GTPase family. UreG subfamily. Homodimer. UreD, UreF and UreG form a complex that acts as a GTP-hydrolysis-dependent molecular chaperone, activating the urease apoprotein by helping to assemble the nickel containing metallocenter of UreC. The UreE protein probably delivers the nickel.

It localises to the cytoplasm. In terms of biological role, facilitates the functional incorporation of the urease nickel metallocenter. This process requires GTP hydrolysis, probably effectuated by UreG. The sequence is that of Urease accessory protein UreG from Polaromonas naphthalenivorans (strain CJ2).